The chain runs to 249 residues: DNA repair protein RecO (249 aa).

It belongs to the RecO family.

Functionally, involved in DNA repair and RecF pathway recombination. The chain is DNA repair protein RecO from Polaromonas naphthalenivorans (strain CJ2).